The following is a 210-amino-acid chain: Putative protein-lysine deacylase ABHD14B (210 aa).

At Ala2 the chain carries N-acetylalanine. Ser91 is modified (phosphoserine). Catalysis depends on charge relay system residues Ser111, Asp162, and His188.

This sequence belongs to the AB hydrolase superfamily. ABHD14 family. May interact with TAF1. Ubiquitous. Detected in spleen, thymus, prostate, testis, ovary, small intestine, colon, peripheral blood leukocyte, heart, placenta, lung, liver, skeletal muscle, pancreas and kidney.

The protein resides in the cytoplasm. The protein localises to the nucleus. The enzyme catalyses L-lysyl-[protein] + acetyl-CoA = N(6)-acetyl-L-lysyl-[protein] + CoA + H(+). Acts as an atypical protein-lysine deacetylase in vitro. Catalyzes the deacetylation of lysine residues using CoA as substrate, generating acetyl-CoA and the free amine of protein-lysine residues. Additional experiments are however required to confirm the protein-lysine deacetylase activity in vivo. Has hydrolase activity towards various surrogate p-nitrophenyl (pNp) substrates, such as pNp-butyrate, pNp-acetate and pNp-octanoate in vitro, with a strong preference for pNp-acetate. May activate transcription. The protein is Putative protein-lysine deacylase ABHD14B of Homo sapiens (Human).